The chain runs to 280 residues: Clathrin adapter accessory protein LAA2 (280 aa).

Positions 1 to 26 (MSDRDQIEPVTNALDAESDSSDDFGN) are disordered. The short motif at 19–30 (DSSDDFGNFSDA) is the Ear-binding motif element.

Interacts with the clathrin-associated adapter complex AP-1. Interacts with LAA1.

It is found in the cytoplasmic vesicle. It localises to the clathrin-coated vesicle. Its function is as follows. Involved in localization of clathrin-associated adapter complex (AP-1) and subsequent AP-1-mediated clathrin-coated vesicle cargo loading. Directly mediates the interaction between LAA1 and AP-1 which is required for AP-1 localization. In complex with LAA1, cooperates with the small GTPase ARF1 and the phosphatidyl-inositol-4-phosphate (PI4P) synthesis to confer temporal specificity to AP-1 recruitment. This chain is Clathrin adapter accessory protein LAA2, found in Saccharomyces cerevisiae (strain ATCC 204508 / S288c) (Baker's yeast).